We begin with the raw amino-acid sequence, 892 residues long: Protein FAM193B (892 aa).

Disordered regions lie at residues Met1–Gln78, Ser164–Asp192, Glu237–Lys321, and Asp379–Arg403. Residues Ala28–Ser37 are compositionally biased toward pro residues. Over residues Asp56–Lys65 the composition is skewed to basic and acidic residues. Positions Ser169 to Ser185 are enriched in low complexity. 3 stretches are compositionally biased toward pro residues: residues Pro248–Pro258, Tyr274–Pro285, and Ser309–Lys321. Acidic residues predominate over residues Asp379 to Ser388. Residues Glu391–Thr400 show a composition bias toward low complexity. Residues Asn485–Arg517 adopt a coiled-coil conformation. Polar residues-rich tracts occupy residues Leu587 to Gln597 and Thr610 to Ala621. Disordered stretches follow at residues Leu587–Leu655 and Val671–Asp837. Positions Pro637–Ile650 are enriched in pro residues. The segment covering Lys736–Gly757 has biased composition (low complexity). Ser764, Ser776, and Ser882 each carry phosphoserine.

The protein belongs to the FAM193 family.

The protein resides in the cytoplasm. The protein localises to the nucleus. In Mus musculus (Mouse), this protein is Protein FAM193B (Fam193b).